We begin with the raw amino-acid sequence, 524 residues long: MSQNSSSLLETWRQVVADLTTLSQQADSGFDPLTPTQRAYLNLTKPIAIVDGYAVLSTPNAMAKNVIENDLGDALTRVLSLRMGRSFSLAVSVEPEQEIPETPAQQEFKYQPDAPVISSNKAPKQYEVGGRGEASTSDGWERTHSAPAPEPHPAPIADPEPELATPQRIPRETPAHNPNREVSLNPKYTFESFVIGPFNRFANAAAVAVAESPAKAFNPLFISGGSGLGKTHLLHAVGNYAQELQPGLRIKYVSSEEFTNDYINSVRDDRQETFKRRYRNLDILMVDDIQFLAGKEGTQEEFFHTFNALHQADKQIILSSDRPPKQLTTLEDRLRTRFEGGLITDIQPPDLETRIAILMKKAQTDGTHVDREVLELIASRFESSIRELEGALIRVSAYSSLINQPIDKEMAIVALRDILPEPEDMEITAPVIMEVTAEYFEISVDTLRGAGKTRAVAHARQLAMYLCRELTDMSLPKIGDVFGGKDHTTVMYADRKIRQEMTEKRDTYDEIQQLTQLIKSRGRN.

Residues 1 to 85 form a domain I, interacts with DnaA modulators region; it reads MSQNSSSLLE…TRVLSLRMGR (85 aa). Residues 85–182 form a domain II region; the sequence is RSFSLAVSVE…TPAHNPNREV (98 aa). The interval 95 to 183 is disordered; sequence PEQEIPETPA…PAHNPNREVS (89 aa). Over residues 148–158 the composition is skewed to pro residues; that stretch reads APEPHPAPIAD. Residues 183 to 399 form a domain III, AAA+ region region; sequence SLNPKYTFES…GALIRVSAYS (217 aa). Residues Gly227, Gly229, Lys230, and Thr231 each coordinate ATP. A domain IV, binds dsDNA region spans residues 400–524; the sequence is SLINQPIDKE…TQLIKSRGRN (125 aa).

The protein belongs to the DnaA family. Oligomerizes as a right-handed, spiral filament on DNA at oriC.

It localises to the cytoplasm. Functionally, plays an essential role in the initiation and regulation of chromosomal replication. ATP-DnaA binds to the origin of replication (oriC) to initiate formation of the DNA replication initiation complex once per cell cycle. Binds the DnaA box (a 9 base pair repeat at the origin) and separates the double-stranded (ds)DNA. Forms a right-handed helical filament on oriC DNA; dsDNA binds to the exterior of the filament while single-stranded (ss)DNA is stabiized in the filament's interior. The ATP-DnaA-oriC complex binds and stabilizes one strand of the AT-rich DNA unwinding element (DUE), permitting loading of DNA polymerase. After initiation quickly degrades to an ADP-DnaA complex that is not apt for DNA replication. Binds acidic phospholipids. This is Chromosomal replication initiator protein DnaA from Corynebacterium glutamicum (strain ATCC 13032 / DSM 20300 / JCM 1318 / BCRC 11384 / CCUG 27702 / LMG 3730 / NBRC 12168 / NCIMB 10025 / NRRL B-2784 / 534).